Here is a 261-residue protein sequence, read N- to C-terminus: Methyl jasmonate esterase 1 (261 aa).

In terms of domain architecture, AB hydrolase-1 spans 8–251; the sequence is FVLVHGACHG…MFSKPLDLCA (244 aa). S82 serves as the catalytic Acyl-ester intermediate. Active-site charge relay system residues include D211 and H239.

Belongs to the AB hydrolase superfamily. Methylesterase family. Homodimer.

It carries out the reaction methyl (-)-jasmonate + H2O = jasmonate + methanol + H(+). It catalyses the reaction methyl salicylate + H2O = salicylate + methanol + H(+). Its pathway is plant hormone biosynthesis. It functions in the pathway lipid metabolism; oxylipin biosynthesis. Its function is as follows. Methylesterase that catalyzes the hydrolysis of methyl jasmonate (MeJA) into jasmonate (JA). Can also use methyl salicylate (MeSA) as substrate with a lower efficiency. This chain is Methyl jasmonate esterase 1, found in Vitis vinifera (Grape).